The chain runs to 533 residues: T-complex protein 1 subunit delta (533 aa).

The tract at residues 1 to 24 (MVVKPAARGMKPQGQAYKDKSKPA) is disordered.

This sequence belongs to the TCP-1 chaperonin family. In terms of assembly, heterooligomeric complex of about 850 to 900 kDa that forms two stacked rings, 12 to 16 nm in diameter.

The protein localises to the cytoplasm. Molecular chaperone; assists the folding of proteins upon ATP hydrolysis. Known to play a role, in vitro, in the folding of actin and tubulin. The protein is T-complex protein 1 subunit delta of Ochlerotatus triseriatus (Eastern treehole mosquito).